Here is a 255-residue protein sequence, read N- to C-terminus: NAD(P)H-quinone oxidoreductase subunit K, chloroplastic (255 aa).

Residues Cys47, Cys48, Cys112, and Cys143 each coordinate [4Fe-4S] cluster.

It belongs to the complex I 20 kDa subunit family. As to quaternary structure, NDH is composed of at least 16 different subunits, 5 of which are encoded in the nucleus. [4Fe-4S] cluster is required as a cofactor.

It is found in the plastid. Its subcellular location is the chloroplast thylakoid membrane. The enzyme catalyses a plastoquinone + NADH + (n+1) H(+)(in) = a plastoquinol + NAD(+) + n H(+)(out). It carries out the reaction a plastoquinone + NADPH + (n+1) H(+)(in) = a plastoquinol + NADP(+) + n H(+)(out). NDH shuttles electrons from NAD(P)H:plastoquinone, via FMN and iron-sulfur (Fe-S) centers, to quinones in the photosynthetic chain and possibly in a chloroplast respiratory chain. The immediate electron acceptor for the enzyme in this species is believed to be plastoquinone. Couples the redox reaction to proton translocation, and thus conserves the redox energy in a proton gradient. In Zygnema circumcarinatum (Green alga), this protein is NAD(P)H-quinone oxidoreductase subunit K, chloroplastic.